Here is a 556-residue protein sequence, read N- to C-terminus: Arginine--tRNA ligase (556 aa).

The 'HIGH' region signature appears at 132 to 142 (ANPTGDLHLGH).

The protein belongs to the class-I aminoacyl-tRNA synthetase family. As to quaternary structure, monomer.

It is found in the cytoplasm. The catalysed reaction is tRNA(Arg) + L-arginine + ATP = L-arginyl-tRNA(Arg) + AMP + diphosphate. The sequence is that of Arginine--tRNA ligase from Listeria monocytogenes serovar 1/2a (strain ATCC BAA-679 / EGD-e).